Reading from the N-terminus, the 87-residue chain is Scorpine-like peptide Tco 41.46-2 (87 aa).

A signal peptide spans 1-19 (MERKLALLLFLGMVTLASC). Residues 53-87 (QFGCPAYEGYCNNHCQDIERKDGECHGFKCKCAKD) enclose the BetaSPN-type CS-alpha/beta domain. 3 disulfide bridges follow: Cys56–Cys77, Cys63–Cys82, and Cys67–Cys84.

This sequence belongs to the long chain scorpion toxin family. Class 1 subfamily. In terms of tissue distribution, expressed by the venom gland.

The protein resides in the secreted. In terms of biological role, may have antibacterial activity. Functionally, inhibits voltage-gated potassium channel. Does not induce hemolytic activity, lactate dehydrogenase (LDH) release from mast cells, mast cell degranulation, and antimicrobial effects. In vivo, injection into mice causes moderate edema formation, but induces very weak or no change in nociceptive sensibility. It also reduces mice locomotion, suggesting an increase in anxiety, but causes no alteration in rearing (standing on hind limbs). This chain is Scorpine-like peptide Tco 41.46-2, found in Tityus costatus (Brazilian scorpion).